The primary structure comprises 301 residues: Probable alpha-L-glutamate ligase 2 (301 aa).

Residues 104-287 (LQLLSRKGIG…VTEPIVEYIE (184 aa)) form the ATP-grasp domain. ATP-binding positions include K141, 178 to 179 (EY), D187, and 211 to 213 (RSN). Mg(2+) is bound by residues D248, E260, and N262. Positions 248, 260, and 262 each coordinate Mn(2+).

It belongs to the RimK family. The cofactor is Mg(2+). Requires Mn(2+) as cofactor.

The polypeptide is Probable alpha-L-glutamate ligase 2 (Shewanella baltica (strain OS195)).